A 412-amino-acid polypeptide reads, in one-letter code: Adenosine receptor A2a (412 aa).

The Extracellular portion of the chain corresponds to 1–7 (MSTMGSW). A helical transmembrane segment spans residues 8–32 (VYITVELAIAVLAILGNVLVCWAVW). The Cytoplasmic segment spans residues 33–42 (LNSNLQNVTN). A helical membrane pass occupies residues 43–66 (YFVVSLAAADIAVGVLAIPFAITI). Residues 67–77 (STGFCAACHNC) are Extracellular-facing. Cystine bridges form between C71-C159, C74-C146, and C77-C166. A helical transmembrane segment spans residues 78–100 (LFFACFVLVLTQSSIFSLLAIAI). At 101–120 (DRYIAIRIPLRYNGLVTGTR) the chain is on the cytoplasmic side. Residues 121–143 (AKGIIAVCWVLSFAIGLTPMLGW) form a helical membrane-spanning segment. The Extracellular portion of the chain corresponds to 144-173 (NNCSQPKEGRNYSQGCGEGQVACLFEDVVP). Residues N145 and N154 are each glycosylated (N-linked (GlcNAc...) asparagine). E169 contributes to the adenosine binding site. Residues 174-198 (MNYMVYYNFFAFVLVPLLLMLGVYL) traverse the membrane as a helical segment. Over 199-234 (RIFLAARRQLKQMESQPLPGERARSTLQKEVHAAKS) the chain is Cytoplasmic. A helical transmembrane segment spans residues 235-258 (LAIIVGLFALCWLPLHIINCFTFF). N253 is a binding site for adenosine. C259 and C262 are oxidised to a cystine. Residues 259–266 (CPECSHAP) are Extracellular-facing. Residues 267–290 (LWLMYLTIVLSHTNSVVNPFIYAY) traverse the membrane as a helical segment. Residues S277 and H278 each contribute to the adenosine site. Topologically, residues 291–412 (RIREFRQTFR…PLAQDGAGVS (122 aa)) are cytoplasmic. The segment at 392-412 (GACPESPGLEGPLAQDGAGVS) is disordered.

Belongs to the G-protein coupled receptor 1 family. Interacts (via cytoplasmic C-terminal domain) with USP4; the interaction is direct. May interact with DRD4. Interacts with NECAB2. Interacts (via cytoplasmic C-terminal domain) with GAS2L2; interaction enhances receptor-mediated adenylyl cyclase activity. Ubiquitinated. Deubiquitinated by USP4; leading to stabilization and expression at the cell surface.

The protein localises to the cell membrane. Receptor for adenosine. The activity of this receptor is mediated by G proteins which activate adenylyl cyclase. The protein is Adenosine receptor A2a (ADORA2A) of Canis lupus familiaris (Dog).